Consider the following 513-residue polypeptide: ATP synthase subunit alpha (513 aa).

An ATP-binding site is contributed by 172 to 179; it reads GDRQTGKT.

The protein belongs to the ATPase alpha/beta chains family. F-type ATPases have 2 components, CF(1) - the catalytic core - and CF(0) - the membrane proton channel. CF(1) has five subunits: alpha(3), beta(3), gamma(1), delta(1), epsilon(1). CF(0) has three main subunits: a(1), b(2) and c(9-12). The alpha and beta chains form an alternating ring which encloses part of the gamma chain. CF(1) is attached to CF(0) by a central stalk formed by the gamma and epsilon chains, while a peripheral stalk is formed by the delta and b chains.

The protein localises to the cell inner membrane. The enzyme catalyses ATP + H2O + 4 H(+)(in) = ADP + phosphate + 5 H(+)(out). Functionally, produces ATP from ADP in the presence of a proton gradient across the membrane. The alpha chain is a regulatory subunit. The chain is ATP synthase subunit alpha from Gluconacetobacter diazotrophicus (strain ATCC 49037 / DSM 5601 / CCUG 37298 / CIP 103539 / LMG 7603 / PAl5).